We begin with the raw amino-acid sequence, 446 residues long: N-succinylarginine dihydrolase (446 aa).

Substrate-binding positions include 19-28, Asn-110, and 137-138; these read AGLSFGNVAS and HR. Glu-174 is a catalytic residue. Position 213 (Arg-213) interacts with substrate. Residue His-249 is part of the active site. The substrate site is built by Asp-251 and Asn-364. Residue Cys-370 is the Nucleophile of the active site.

Belongs to the succinylarginine dihydrolase family. As to quaternary structure, homodimer.

It catalyses the reaction N(2)-succinyl-L-arginine + 2 H2O + 2 H(+) = N(2)-succinyl-L-ornithine + 2 NH4(+) + CO2. The protein operates within amino-acid degradation; L-arginine degradation via AST pathway; L-glutamate and succinate from L-arginine: step 2/5. Functionally, catalyzes the hydrolysis of N(2)-succinylarginine into N(2)-succinylornithine, ammonia and CO(2). The polypeptide is N-succinylarginine dihydrolase (Burkholderia mallei (strain NCTC 10247)).